The following is a 352-amino-acid chain: C-C chemokine receptor type 5 (352 aa).

At 1-30 (MDYQVSSPTYDIDYYTSEPCQKINVKQIAA) the chain is on the extracellular side. The residue at position 3 (Y3) is a Sulfotyrosine. S6 and S7 each carry an O-linked (GalNAc...) serine glycan. A sulfotyrosine mark is found at Y10, Y14, and Y15. Disulfide bonds link C20-C269 and C101-C178. The chain crosses the membrane as a helical span at residues 31–58 (RLLPPLYSLVFIFGFVGNILVVLILINC). Residues 59 to 68 (KRLKSMTDIY) are Cytoplasmic-facing. The helical transmembrane segment at 69 to 89 (LLNLAISDLLFLLTIPFWAHY) threads the bilayer. The Extracellular segment spans residues 90 to 102 (AAAQWDFGNTMCQ). Residues 103–124 (LLTGLYLIGFFSGIFFIILLTI) traverse the membrane as a helical segment. Residues 125 to 141 (DRYLAIVHAVFALKART) are Cytoplasmic-facing. Residues 142-166 (VTFGLVTSVITWVVAVFASLPGIIF) form a helical membrane-spanning segment. At 167-198 (TRSQREGLHYTCSSHFPSSQYQFWKNFQTLKI) the chain is on the extracellular side. The chain crosses the membrane as a helical span at residues 199-218 (VILGLVLPLLVMVICYSGIL). At 219 to 235 (KTLLRCRNEKKRHRAVR) the chain is on the cytoplasmic side. Residues 236–260 (LIFTIMIVYFLFWAPYNIVLLLNTF) form a helical membrane-spanning segment. Residues 261–277 (QEFFGLNNCSSSNRLDQ) lie on the Extracellular side of the membrane. A helical membrane pass occupies residues 278–301 (AMQVTETLGMTHCCINPIIYAFVG). Residues 302–352 (EKFRNYLLVFFQKHLAKRFCKCCSIFQQEAPERASSVYTRSTGEQETTVGL) are Cytoplasmic-facing. Residues C321, C323, and C324 are each lipidated (S-palmitoyl cysteine). A phosphoserine; by BARK1 mark is found at S336, S337, and S342.

It belongs to the G-protein coupled receptor 1 family. Interacts with PRAF2. Efficient ligand binding to CCL3/MIP-1alpha and CCL4/MIP-1beta requires sulfation, O-glycosylation and sialic acid modifications. Glycosylation on Ser-6 is required for efficient binding of CCL4. Interacts with GRK2. Interacts with ARRB1 and ARRB2. Interacts with CNIH4. Interacts with S100A4; this interaction stimulates T-lymphocyte chemotaxis. Post-translationally, sulfated on at least 2 of the N-terminal tyrosines. Sulfation is required for efficient binding of the chemokines, CCL3 and CCL4. Palmitoylation in the C-terminal is important for cell surface expression. In terms of processing, phosphorylation on serine residues in the C-terminal is stimulated by binding CC chemokines especially by APO-RANTES. Post-translationally, O-glycosylated, but not N-glycosylated. Ser-6 appears to be the major site even if Ser-7 may be also O-glycosylated. Also sialylated glycans present which contribute to chemokine binding. Thr-16 and Ser-17 may also be glycosylated and, if so, with small moieties such as a T-antigen.

The protein resides in the cell membrane. Functionally, receptor for a number of inflammatory CC-chemokines including CCL3/MIP-1-alpha, CCL4/MIP-1-beta and RANTES and subsequently transduces a signal by increasing the intracellular calcium ion level. May play a role in the control of granulocytic lineage proliferation or differentiation. Participates in T-lymphocyte migration to the infection site by acting as a chemotactic receptor. This Allochrocebus lhoesti (L'Hoest's monkey) protein is C-C chemokine receptor type 5 (CCR5).